We begin with the raw amino-acid sequence, 31 residues long: Antifungal protein 1 (31 aa).

The protein localises to the secreted. Functionally, antifungal activity against C.albicans ATCC 76615. The sequence is that of Antifungal protein 1 from Musca domestica (House fly).